The sequence spans 620 residues: uncharacterized protein (620 aa).

Belongs to the chlamydial CPn_0512/CT_425/TC_0708 family.

This is an uncharacterized protein from Chlamydia pneumoniae (Chlamydophila pneumoniae).